The following is a 325-amino-acid chain: Lipid droplet-associated hydrolase (325 aa).

Serine 139 functions as the Nucleophile in the catalytic mechanism. Active-site charge relay system residues include aspartate 271 and histidine 300.

Belongs to the AB hydrolase superfamily. LDAH family.

The protein resides in the lipid droplet. The protein localises to the endoplasmic reticulum. The enzyme catalyses a cholesterol ester + H2O = cholesterol + a fatty acid + H(+). Its function is as follows. Probable serine lipid hydrolase associated with lipid droplets. Has low cholesterol esterase activity. Appears to lack triglyceride lipase activity. Involved in cholesterol and triglyceride homeostasis; stimulates cellular triglyceride accumulation and cellular cholesterol release. Acts antagonistically with PNPLA2/ATGL in regulation of cellular lipid stores. May regulate triglyceride accumulation indirectly through stimulation of PNPLA2/ATGL ubiquitination and proteasomal degradation. Promotes microtubule-dependent lipid droplet fusion. Highly expressed in macrophage-rich areas in atherosclerotic lesions, suggesting that it could promote cholesterol ester turnover in macrophages. The sequence is that of Lipid droplet-associated hydrolase from Pongo abelii (Sumatran orangutan).